The sequence spans 199 residues: Mediator of RNA polymerase II transcription subunit 29 (199 aa).

Residues 1–17 (MAAPQPQAAAVSSASGV) are compositionally biased toward low complexity. The tract at residues 1 to 47 (MAAPQPQAAAVSSASGVSGPGSAGGPGPQQQPQPTQLVGSAQSGLLQ) is disordered. Ala-2 carries the post-translational modification N-acetylalanine. A compositionally biased stretch (gly residues) spans 18–27 (SGPGSAGGPG). The segment covering 28 to 47 (PQQQPQPTQLVGSAQSGLLQ) has biased composition (low complexity).

Belongs to the Mediator complex subunit 29 family. As to quaternary structure, component of the Mediator complex, which is composed of MED1, MED4, MED6, MED7, MED8, MED9, MED10, MED11, MED12, MED13, MED13L, MED14, MED15, MED16, MED17, MED18, MED19, MED20, MED21, MED22, MED23, MED24, MED25, MED26, MED27, MED29, MED30, MED31, CCNC, CDK8 and CDC2L6/CDK11. The MED12, MED13, CCNC and CDK8 subunits form a distinct module termed the CDK8 module. Mediator containing the CDK8 module is less active than Mediator lacking this module in supporting transcriptional activation. Individual preparations of the Mediator complex lacking one or more distinct subunits have been variously termed ARC, CRSP, DRIP, PC2, SMCC and TRAP. Associates with the MED18/MED20 heteromer.

The protein resides in the nucleus. In terms of biological role, component of the Mediator complex, a coactivator involved in the regulated transcription of nearly all RNA polymerase II-dependent genes. Mediator functions as a bridge to convey information from gene-specific regulatory proteins to the basal RNA polymerase II transcription machinery. Mediator is recruited to promoters by direct interactions with regulatory proteins and serves as a scaffold for the assembly of a functional preinitiation complex with RNA polymerase II and the general transcription factors. This chain is Mediator of RNA polymerase II transcription subunit 29 (Med29), found in Mus musculus (Mouse).